The chain runs to 103 residues: Large ribosomal subunit protein uL24 (103 aa).

The protein belongs to the universal ribosomal protein uL24 family. Part of the 50S ribosomal subunit.

In terms of biological role, one of two assembly initiator proteins, it binds directly to the 5'-end of the 23S rRNA, where it nucleates assembly of the 50S subunit. Its function is as follows. One of the proteins that surrounds the polypeptide exit tunnel on the outside of the subunit. This chain is Large ribosomal subunit protein uL24, found in Brucella ovis (strain ATCC 25840 / 63/290 / NCTC 10512).